A 420-amino-acid polypeptide reads, in one-letter code: Pyruvate dehydrogenase E1 component subunit alpha, mitochondrial (420 aa).

The transit peptide at 1–33 (MLAASFKRQPSQLVRGLGAVLRTPTRIGHVRTM) directs the protein to the mitochondrion. Positions 112, 138, 139, 177, 185, 187, 216, 217, 218, 245, and 247 each coordinate pyruvate. Residues Y138 and R139 each coordinate thiamine diphosphate. G185, V187, D216, G217, A218, and N245 together coordinate thiamine diphosphate. A Mg(2+)-binding site is contributed by D216. Residues N245 and Y247 each contribute to the Mg(2+) site. H312 is a thiamine diphosphate binding site. S313 is modified (phosphoserine; by PDK1 and PDK2).

As to quaternary structure, pyruvate dehydrogenase (E1) is a tetramer of 2 alpha and 2 beta subunits. Eukaryotic pyruvate dehydrogenase (PDH) complexes are organized as a core consisting of the oligomeric dihydrolipoamide acetyl-transferase (E2), around which are arranged multiple copies of pyruvate dehydrogenase (E1), dihydrolipoamide dehydrogenase (E3) and protein X (E3BP) bound by non-covalent bonds. Thiamine diphosphate is required as a cofactor. Requires Mg(2+) as cofactor. Phosphorylated at Ser-313 by pyruvate dehydrogenase kinases PKP1 (PDK1) and PKP2 (PDK2), and dephosphorylated by pyruvate dehydrogenase phosphatases PTC5 and PTC6.

The protein localises to the mitochondrion matrix. The catalysed reaction is N(6)-[(R)-lipoyl]-L-lysyl-[protein] + pyruvate + H(+) = N(6)-[(R)-S(8)-acetyldihydrolipoyl]-L-lysyl-[protein] + CO2. With respect to regulation, E1 activity is regulated by phosphorylation (inactivation) and dephosphorylation (activation) of the alpha subunit. The pyruvate dehydrogenase complex catalyzes the overall conversion of pyruvate to acetyl-CoA and CO(2). The chain is Pyruvate dehydrogenase E1 component subunit alpha, mitochondrial (PDA1) from Saccharomyces cerevisiae (strain ATCC 204508 / S288c) (Baker's yeast).